The chain runs to 548 residues: T-complex protein 1 subunit theta (548 aa).

A disordered region spans residues Gln-527–Ala-548.

The protein belongs to the TCP-1 chaperonin family. In terms of assembly, heterooligomeric complex.

It is found in the cytoplasm. Its function is as follows. Molecular chaperone; assists the folding of proteins upon ATP hydrolysis. Known to play a role, in vitro, in the folding of actin and tubulin. Required for correct subcellular localization of pgl-1. In Caenorhabditis elegans, this protein is T-complex protein 1 subunit theta (cct-8).